The sequence spans 422 residues: Tyrosine-protein kinase STYK1 (422 aa).

The helical transmembrane segment at 26–46 (VIIVPTLLVTIFLILLGVILW) threads the bilayer. One can recognise a Protein kinase domain in the interval 114-384 (SEVLEQICSG…ELRLRLEAAI (271 aa)). ATP is bound by residues 120–128 (ICSGSCGPI) and Lys-147. The active-site Proton acceptor is the Asp-251.

Belongs to the protein kinase superfamily. Tyr protein kinase family. As to expression, widely expressed. Highly expressed in brain, placenta and prostate. Expressed in tumor cells such as hepatoma cells L-02, cervix carcinoma cells HeLa, ovary cancer cells Ho8910 and chronic myelogenous leukemia cells K-562, but not in other tumor cells such as epidermoid carcinoma (A-431). Undetectable in most normal lung tissues, widely expressed in lung cancers.

The protein resides in the membrane. It catalyses the reaction L-tyrosyl-[protein] + ATP = O-phospho-L-tyrosyl-[protein] + ADP + H(+). Probable tyrosine protein-kinase, which has strong transforming capabilities on a variety of cell lines. When overexpressed, it can also induce tumor cell invasion as well as metastasis in distant organs. May act by activating both MAP kinase and phosphatidylinositol 3'-kinases (PI3K) pathways. This chain is Tyrosine-protein kinase STYK1 (STYK1), found in Homo sapiens (Human).